The sequence spans 140 residues: Nucleoside diphosphate kinase (140 aa).

Positions 11, 59, 87, 93, 104, and 114 each coordinate ATP. His-117 (pros-phosphohistidine intermediate) is an active-site residue.

It belongs to the NDK family. In terms of assembly, homotetramer. Mg(2+) is required as a cofactor.

It localises to the cytoplasm. The catalysed reaction is a 2'-deoxyribonucleoside 5'-diphosphate + ATP = a 2'-deoxyribonucleoside 5'-triphosphate + ADP. It carries out the reaction a ribonucleoside 5'-diphosphate + ATP = a ribonucleoside 5'-triphosphate + ADP. Its function is as follows. Major role in the synthesis of nucleoside triphosphates other than ATP. The ATP gamma phosphate is transferred to the NDP beta phosphate via a ping-pong mechanism, using a phosphorylated active-site intermediate. The sequence is that of Nucleoside diphosphate kinase from Rickettsia prowazekii (strain Madrid E).